We begin with the raw amino-acid sequence, 527 residues long: N-acetylglutamate synthase, mitochondrial (527 aa).

The transit peptide at 1–18 (MATAWVATALRSAAAARR) directs the protein to the mitochondrion. The tract at residues 14 to 91 (AAARRLRSPG…PLESPAPPAG (78 aa)) is disordered. An amino-acid kinase domain (AAK) region spans residues 19-369 (LRSPGGPGGS…CGTLFKNAER (351 aa)). Residues 54-63 (AHAEDAEGAK) show a composition bias toward basic and acidic residues. Residues 77 to 89 (TPLPTPLESPAPP) are compositionally biased toward pro residues. In terms of domain architecture, N-acetyltransferase spans 368 to 519 (ERMLRVRNLD…HAKGLPDSFC (152 aa)). Substrate is bound by residues K394, K437, and 467-472 (RSRVTN).

The protein belongs to the acetyltransferase family. In terms of assembly, homodimer. Homotetramer. Post-translationally, probably processed by mitochondrial processing peptidase (MPP). The long form has not yet been isolated. In terms of tissue distribution, highly expressed in the liver and small intestine. Weakly expressed in the kidney, spleen and testis.

It is found in the mitochondrion matrix. The catalysed reaction is L-glutamate + acetyl-CoA = N-acetyl-L-glutamate + CoA + H(+). Its pathway is amino-acid biosynthesis; L-arginine biosynthesis; N(2)-acetyl-L-ornithine from L-glutamate: step 1/4. With respect to regulation, increased by L-arginine. Functionally, plays a role in the regulation of ureagenesis by producing the essential cofactor N-acetylglutamate (NAG), thus modulating carbamoylphosphate synthase I (CPS1) activity. In Mus musculus (Mouse), this protein is N-acetylglutamate synthase, mitochondrial (Nags).